Consider the following 506-residue polypeptide: NADH-quinone oxidoreductase subunit N 2 (506 aa).

Helical transmembrane passes span 11–31 (SLAYFAPELVLIAAALLLVVW), 44–64 (LVILSLAALACSGGLGAYFLA), 82–102 (FSNLFRVIFALVTGAIVLFLV), 117–137 (SGELFTLILVLSLGMNLMAAS), 140–160 (LLLIYLSLELVSVISFVLAGF), 175–195 (VIFGGVASGIMLYGMSWIFGI), 222–242 (VFVGTAFMLAGFGYKISAAPF), 254–274 (PTPVTAFLSVGPKAAGFAVLI), 289–309 (GVATPWPVLFGCLAMATMTVG), 323–345 (LAYSSIAHAGYMLLGFSVFSGAG), 356–376 (YCFMNLGAFMVVMAVAEESGG), 394–414 (AAAMAVFLVSLTGLPPTAGFI), 419–439 (LFSALLAAGGAWSWVIAVVGV), and 472–492 (LLGGTACALAIPTVLLGVYWG).

The protein belongs to the complex I subunit 2 family. NDH-1 is composed of 14 different subunits. Subunits NuoA, H, J, K, L, M, N constitute the membrane sector of the complex.

The protein localises to the cell inner membrane. The catalysed reaction is a quinone + NADH + 5 H(+)(in) = a quinol + NAD(+) + 4 H(+)(out). NDH-1 shuttles electrons from NADH, via FMN and iron-sulfur (Fe-S) centers, to quinones in the respiratory chain. The immediate electron acceptor for the enzyme in this species is believed to be ubiquinone. Couples the redox reaction to proton translocation (for every two electrons transferred, four hydrogen ions are translocated across the cytoplasmic membrane), and thus conserves the redox energy in a proton gradient. This chain is NADH-quinone oxidoreductase subunit N 2, found in Sorangium cellulosum (strain So ce56) (Polyangium cellulosum (strain So ce56)).